The following is a 296-amino-acid chain: N-acetylmuramic acid 6-phosphate etherase (296 aa).

Residues 54 to 217 (VISCFQKGGR…STASMVGIGK (164 aa)) form the SIS domain. The active-site Proton donor is the E82. Residue E113 is part of the active site.

This sequence belongs to the GCKR-like family. MurNAc-6-P etherase subfamily. In terms of assembly, homodimer.

The catalysed reaction is N-acetyl-D-muramate 6-phosphate + H2O = N-acetyl-D-glucosamine 6-phosphate + (R)-lactate. It functions in the pathway amino-sugar metabolism; N-acetylmuramate degradation. Its function is as follows. Specifically catalyzes the cleavage of the D-lactyl ether substituent of MurNAc 6-phosphate, producing GlcNAc 6-phosphate and D-lactate. This is N-acetylmuramic acid 6-phosphate etherase from Listeria monocytogenes serotype 4b (strain CLIP80459).